Reading from the N-terminus, the 142-residue chain is Mitochondrial import receptor subunit TOM22 homolog (142 aa).

Residues 1-11 (MAAAVAAAGAG) show a composition bias toward low complexity. The tract at residues 1 to 40 (MAAAVAAAGAGEPLSPEELVPKAEAEKAEEDLEEDDDDEL) is disordered. Alanine 2 is modified (N-acetylalanine). Residues 2–82 (AAAVAAAGAG…VAQKMYRFSR (81 aa)) are Cytoplasmic-facing. At serine 15 the chain carries Phosphoserine. Residues 27 to 40 (KAEEDLEEDDDDEL) are compositionally biased toward acidic residues. The tract at residues 41–50 (DETLSERLWG) is import sequence; necessary for mitochondrion outer membrane localization and integration in the TOM complex. A Phosphothreonine modification is found at threonine 43. Residue serine 45 is modified to Phosphoserine. The helical transmembrane segment at 83-103 (AALWIGTTSFMILVLPVVFET) threads the bilayer. The interval 83–103 (AALWIGTTSFMILVLPVVFET) is TMD; necessary for mitochondrion outer membrane localization and integration in the TOM complex. Topologically, residues 104 to 142 (EKLQMEQQQQLQQRQILLGPNTGLSGGMPGALPPLPGKI) are mitochondrial intermembrane. The tract at residues 123–142 (PNTGLSGGMPGALPPLPGKI) is C-tail signal; necessary for mitochondrion outer membrane localization and integration in the TOM complex.

Belongs to the Tom22 family. As to quaternary structure, forms part of the preprotein translocase complex of the outer mitochondrial membrane (TOM complex) which consists of at least 7 different proteins (TOMM5, TOMM6, TOMM7, TOMM20, TOMM22, TOMM40 and TOMM70). Interacts with TOMM40. Interacts with PPP2R2B.

Its subcellular location is the mitochondrion outer membrane. In terms of biological role, central receptor component of the translocase of the outer membrane of mitochondria (TOM complex) responsible for the recognition and translocation of cytosolically synthesized mitochondrial preproteins. Together with the peripheral receptor TOM20 functions as the transit peptide receptor and facilitates the movement of preproteins into the translocation pore. Required for the translocation across the mitochondrial outer membrane of cytochrome P450 monooxygenases. This Rattus norvegicus (Rat) protein is Mitochondrial import receptor subunit TOM22 homolog (Tomm22).